The sequence spans 353 residues: C-X-C chemokine receptor type 2 (353 aa).

The Extracellular portion of the chain corresponds to 1 to 45; the sequence is FNMESDSFEDFWKGEDLSNYSYSSALPPFLLDASPCEPESLEINK. Asn19 carries N-linked (GlcNAc...) asparagine glycosylation. Residues 46 to 72 form a helical membrane-spanning segment; it reads YFVVIIYALVFLLSLLGNSLVILVILY. Over 73–81 the chain is Cytoplasmic; it reads SRVGRSVTD. A helical transmembrane segment spans residues 82–102; the sequence is VYLLNLALADLLFALTLPIWA. Over 103 to 117 the chain is Extracellular; the sequence is ASKVNGWIFGTFLCK. Cys116 and Cys193 are oxidised to a cystine. A helical transmembrane segment spans residues 118–139; sequence VVSLLKEVNFYSGILLLACISV. The Cytoplasmic portion of the chain corresponds to 140-160; that stretch reads DRYLAIVHATRTLTQKRYLVK. Residues 161 to 180 traverse the membrane as a helical segment; it reads FICLSIWGLSLLLALPVLLF. Topologically, residues 181-205 are extracellular; it reads RRTIYPSNVSPVCYEDMGNNTANWR. Residues 206–228 traverse the membrane as a helical segment; it reads MLLRILPQSFGFIVPLLIMLFCY. Topologically, residues 229–248 are cytoplasmic; sequence GFTLRTLFKAHMGQKHRAMR. A helical membrane pass occupies residues 249–270; sequence VIFAVVLIFLLCWLPYNLVLLA. Topologically, residues 271-291 are extracellular; that stretch reads DTLMRTQVIQETCERRNHINQ. Residues 292-312 form a helical membrane-spanning segment; sequence ALDATEILGILHSCLNPLIYA. Residues 313-353 lie on the Cytoplasmic side of the membrane; it reads FIGQKFCHGLLKILAIHGLISKDSLPKDSRPSFVGSSSGHT.

The protein belongs to the G-protein coupled receptor 1 family. As to quaternary structure, interacts with IL8. Interacts with GNAI2. Phosphorylated upon ligand binding; which is required for desensitization.

Its subcellular location is the cell membrane. Functionally, receptor for interleukin-8 which is a powerful neutrophil chemotactic factor. Binding of IL-8 to the receptor causes activation of neutrophils. This response is mediated via a G-protein that activates a phosphatidylinositol-calcium second messenger system. Binds to IL-8 with high affinity. Also binds with high affinity to CXCL3, GRO/MGSA and NAP-2. In Gorilla gorilla gorilla (Western lowland gorilla), this protein is C-X-C chemokine receptor type 2 (CXCR2).